We begin with the raw amino-acid sequence, 168 residues long: Disulfide bond formation protein B 2 (168 aa).

The Cytoplasmic portion of the chain corresponds to 1-9 (MLPARLRTF). Residues 10–26 (FLPACLVALAVLVASFR) form a helical membrane-spanning segment. At 27–44 (LENTVGLMPCPLCLSQRL) the chain is on the periplasmic side. Cysteines 36 and 39 form a disulfide. A helical transmembrane segment spans residues 45–61 (LLGGYALLCFAAVLQAP). Residues 62-67 (GTRGIL) lie on the Cytoplasmic side of the membrane. Residues 68–85 (RYARLALGCSLAGALLAA) form a helical membrane-spanning segment. Residues 86 to 140 (RHVWLQGAEGVNEVCPVPIGRVFEQSWSEAARQLLLGGPDCRSLAWSFLDLTLPE) are Periplasmic-facing. An intrachain disulfide couples Cys100 to Cys126. Residues 141–159 (WSLLAFLLLAVLPLSCLLA) traverse the membrane as a helical segment. The Cytoplasmic segment spans residues 160 to 168 (YRFRTLART).

Belongs to the DsbB family.

It localises to the cell inner membrane. Functionally, required for disulfide bond formation in some periplasmic proteins. Acts by oxidizing the DsbA protein. The protein is Disulfide bond formation protein B 2 (dsbB2) of Pseudomonas putida (strain ATCC 47054 / DSM 6125 / CFBP 8728 / NCIMB 11950 / KT2440).